A 266-amino-acid polypeptide reads, in one-letter code: Glucosamine-6-phosphate deaminase (266 aa).

The active-site Proton acceptor; for enolization step is the D72. Residue D141 is the For ring-opening step of the active site. The active-site Proton acceptor; for ring-opening step is the H143. E148 functions as the For ring-opening step in the catalytic mechanism.

This sequence belongs to the glucosamine/galactosamine-6-phosphate isomerase family. NagB subfamily. As to quaternary structure, homohexamer.

The enzyme catalyses alpha-D-glucosamine 6-phosphate + H2O = beta-D-fructose 6-phosphate + NH4(+). Its pathway is amino-sugar metabolism; N-acetylneuraminate degradation; D-fructose 6-phosphate from N-acetylneuraminate: step 5/5. Its activity is regulated as follows. Allosterically activated by N-acetylglucosamine 6-phosphate (GlcNAc6P). Functionally, catalyzes the reversible isomerization-deamination of glucosamine 6-phosphate (GlcN6P) to form fructose 6-phosphate (Fru6P) and ammonium ion. This is Glucosamine-6-phosphate deaminase from Pectobacterium atrosepticum (strain SCRI 1043 / ATCC BAA-672) (Erwinia carotovora subsp. atroseptica).